We begin with the raw amino-acid sequence, 491 residues long: Protein nucleotidyltransferase YdiU (491 aa).

Positions 94, 96, 97, 117, 129, 130, 180, and 187 each coordinate ATP. Catalysis depends on D256, which acts as the Proton acceptor. Mg(2+)-binding residues include N257 and D266. D266 provides a ligand contact to ATP.

The protein belongs to the SELO family. Mg(2+) is required as a cofactor. Mn(2+) serves as cofactor.

The catalysed reaction is L-seryl-[protein] + ATP = 3-O-(5'-adenylyl)-L-seryl-[protein] + diphosphate. The enzyme catalyses L-threonyl-[protein] + ATP = 3-O-(5'-adenylyl)-L-threonyl-[protein] + diphosphate. It catalyses the reaction L-tyrosyl-[protein] + ATP = O-(5'-adenylyl)-L-tyrosyl-[protein] + diphosphate. It carries out the reaction L-histidyl-[protein] + UTP = N(tele)-(5'-uridylyl)-L-histidyl-[protein] + diphosphate. The catalysed reaction is L-seryl-[protein] + UTP = O-(5'-uridylyl)-L-seryl-[protein] + diphosphate. The enzyme catalyses L-tyrosyl-[protein] + UTP = O-(5'-uridylyl)-L-tyrosyl-[protein] + diphosphate. Its function is as follows. Nucleotidyltransferase involved in the post-translational modification of proteins. It can catalyze the addition of adenosine monophosphate (AMP) or uridine monophosphate (UMP) to a protein, resulting in modifications known as AMPylation and UMPylation. In Bacillus cytotoxicus (strain DSM 22905 / CIP 110041 / 391-98 / NVH 391-98), this protein is Protein nucleotidyltransferase YdiU.